We begin with the raw amino-acid sequence, 187 residues long: Calcium and integrin-binding family member 2 (187 aa).

3 EF-hand domains span residues 66–101 (KENPFRNRIVESFSEDGQGNLSFNDFVDMFSVLSEM), 103–138 (PRELKAIYAFKIYDFNVDNYICKEDLEKTLNKLTKE), and 144–179 (EVNLVCEKAIEEADLDGDNKLSFADFENMISRAPDF). Asp157, Asp159, Asp161, Lys163, and Asp168 together coordinate Ca(2+).

Monomer. Homodimer. Enriched in central and striolar hair cells.

The protein localises to the cytoplasm. The protein resides in the cell projection. It localises to the stereocilium. Its subcellular location is the photoreceptor inner segment. It is found in the cilium. The protein localises to the photoreceptor outer segment. The protein resides in the cell membrane. It localises to the sarcolemma. Its function is as follows. Calcium- and integrin-binding protein. Plays a role in intracellular calcium homeostasis. Critical for proper photoreceptor cell maintenance and function. Essential for development, maintenance and function of mechanosensory hair cells. The polypeptide is Calcium and integrin-binding family member 2 (Danio rerio (Zebrafish)).